A 385-amino-acid chain; its full sequence is Flavin-dependent monooxygenase (385 aa).

Residues 12–15 (ASIA), 34–36 (EKN), 44–47 (YAID), arginine 105, tyrosine 267, aspartate 289, and 296–302 (PLSGQGT) contribute to the FAD site.

This sequence belongs to the aromatic-ring hydroxylase family. FAD serves as cofactor.

It carries out the reaction 7-chlorotetracycline + NADPH + O2 + H(+) = (1S,10S,10aS)-3-(CONH2)-9-Cl-1-(Me2N)-3,3a,4,10-(HO)4-10-Me-2,5-dioxo-1H,10aH,11H,11aH-cyclopenta[b]anthracen-6-olate + CO + NADP(+) + H2O. It catalyses the reaction a tetracycline + NADPH + O2 + H(+) = a (1S,10aS)-3-(CONH2)-1-(Me2N)-3,3a,4,6-(HO)4-2,5-dioxo-1H,10aH,11H,11aH-cyclopenta[b]anthracene + CO + NADP(+) + H2O. Inhibited by anhydrotetracycline. In terms of biological role, an FAD-requiring monooxygenase active on tetracycline antibiotic and some of its derivatives, which leads to their inactivation. Expression in E.coli confers high resistance to oxytetracycline, slightly less resistance to tetracycline, moderate resistance to minocycline but no resistance to tigecycline. Degrades tetracycline and oxytetracycline; the reaction requires NADPH. Degrades and confers resistance to chlortetracycline. This chain is Flavin-dependent monooxygenase, found in Unknown prokaryotic organism.